A 182-amino-acid chain; its full sequence is uncharacterized protein (182 aa).

Residues 151-172 are disordered; that stretch reads RGPGKPFADEKPCPRERPPADQ. The span at 157–169 shows a compositional bias: basic and acidic residues; the sequence is FADEKPCPRERPP.

This is an uncharacterized protein from Mycobacterium tuberculosis (strain CDC 1551 / Oshkosh).